The following is a 293-amino-acid chain: Nucleotide-binding protein BcerKBAB4_4948 (293 aa).

14–21 provides a ligand contact to ATP; the sequence is GMSGAGKT. 65 to 68 is a GTP binding site; that stretch reads DLRG.

This sequence belongs to the RapZ-like family.

Functionally, displays ATPase and GTPase activities. This chain is Nucleotide-binding protein BcerKBAB4_4948, found in Bacillus mycoides (strain KBAB4) (Bacillus weihenstephanensis).